Consider the following 208-residue polypeptide: Small ribosomal subunit protein uS9c (208 aa).

The transit peptide at 1–51 (MAVSISSLTSSFASLSFTSNLTPKPQTLPMARTKPFSLSNPAVVKPLVITA) directs the protein to the chloroplast. T52 carries the post-translational modification N-acetylthreonine. Residues 185–208 (DSRIVERKKPGLKKARKAPQFSKR) are disordered. The span at 194-208 (PGLKKARKAPQFSKR) shows a compositional bias: basic residues.

In terms of assembly, component of the chloroplast small ribosomal subunit (SSU). Mature 70S chloroplast ribosomes of higher plants consist of a small (30S) and a large (50S) subunit. The 30S small subunit contains 1 molecule of ribosomal RNA (16S rRNA) and 24 different proteins. The 50S large subunit contains 3 rRNA molecules (23S, 5S and 4.5S rRNA) and 33 different proteins. uS9c binds directly to 16S ribosomal RNA. uS9c interacts with translation factor pY (PSRP1).

The protein localises to the plastid. Its subcellular location is the chloroplast. Its function is as follows. Component of the chloroplast ribosome (chloro-ribosome), a dedicated translation machinery responsible for the synthesis of chloroplast genome-encoded proteins, including proteins of the transcription and translation machinery and components of the photosynthetic apparatus. The chain is Small ribosomal subunit protein uS9c (PRPS9) from Spinacia oleracea (Spinach).